We begin with the raw amino-acid sequence, 245 residues long: MGRLDGKVIVLSAGAQGIGKAAAIAFAKEGAKVIATDINGEKLKELESYKGIETRVLDVTKKDQIEKLSKEIDRIDVLFNVAGFVHHGSILDCEEADWDFTMNVNVRSMYLMIKTFLPKMLAQKSGNIINMSSVASSIKGVVNRCVYSTSKAAVIGLTKSVAADFIEQGIRCNCICPGTVDTPSLRERIEARPDPEQALKDFLARQKTGRMCTAEEVAHLCVYLASDEAAYVTGNAHIIDGGWSL.

Residues 16–18 (QGI), aspartate 37, and aspartate 58 contribute to the NAD(+) site. Arginine 144 lines the substrate pocket. The active-site Proton acceptor is tyrosine 147. Residues lysine 151 and 180–184 (VDTPS) each bind NAD(+). 2 residues coordinate substrate: arginine 188 and arginine 205.

Belongs to the short-chain dehydrogenases/reductases (SDR) family. In terms of assembly, homotetramer.

It is found in the cytoplasm. It catalyses the reaction cis-4-hydroxy-L-proline + NAD(+) = 4-oxo-L-proline + NADH + H(+). The enzyme catalyses (R)-3-hydroxybutanoate + NAD(+) = acetoacetate + NADH + H(+). It functions in the pathway amino-acid metabolism. Its pathway is siderophore biosynthesis. Its function is as follows. NAD(H)-dependent dehydrogenase/reductase with a preference for cyclic substrates. Catalyzes stereoselective conversion of 4-oxo-L-proline to cis-4-hydroxy-L-proline, likely a detoxification mechanism for ketoprolines. Mediates the formation of 2,5-dihydroxybenzoate (2,5-DHBA), a siderophore that chelates free cytoplasmic iron, thereby regulating iron transport and homeostasis while protecting cells against free radical-induced oxidative stress. The iron-siderophore complex is imported into mitochondria, providing an iron source for mitochondrial metabolic processes in particular heme synthesis. May act as a 3-hydroxybutyrate dehydrogenase. This is Dehydrogenase/reductase SDR family member 6 (bdh2) from Aquarana catesbeiana (American bullfrog).